We begin with the raw amino-acid sequence, 1345 residues long: DNA-directed RNA polymerase subunit beta' (1345 aa).

The Zn(2+) site is built by Cys-60, Cys-62, Cys-75, and Cys-78. 3 residues coordinate Mg(2+): Asp-536, Asp-538, and Asp-540. Zn(2+) contacts are provided by Cys-895, Cys-974, Cys-981, and Cys-984. The disordered stretch occupies residues 1325–1345 (DDNDNPVDFGDEFRIDPDELK). Residues 1335–1345 (DEFRIDPDELK) show a composition bias toward basic and acidic residues.

It belongs to the RNA polymerase beta' chain family. The RNAP catalytic core consists of 2 alpha, 1 beta, 1 beta' and 1 omega subunit. When a sigma factor is associated with the core the holoenzyme is formed, which can initiate transcription. Mg(2+) serves as cofactor. Requires Zn(2+) as cofactor.

The enzyme catalyses RNA(n) + a ribonucleoside 5'-triphosphate = RNA(n+1) + diphosphate. In terms of biological role, DNA-dependent RNA polymerase catalyzes the transcription of DNA into RNA using the four ribonucleoside triphosphates as substrates. This is DNA-directed RNA polymerase subunit beta' from Bifidobacterium animalis subsp. lactis (strain AD011).